Reading from the N-terminus, the 123-residue chain is Cytochrome c-555 (123 aa).

Residues 1 to 27 (MDHKKTSIRTTALAALVLGAVAAPAFS) form the signal peptide. C46, C49, H50, and M86 together coordinate heme c.

In terms of processing, binds 1 heme c group covalently per subunit.

This chain is Cytochrome c-555, found in Methylococcus capsulatus (strain ATCC 33009 / NCIMB 11132 / Bath).